The chain runs to 468 residues: Glutamine synthetase (468 aa).

In terms of domain architecture, GS beta-grasp spans 11-96 (HDVKWIDLRF…LVCDIIEPST (86 aa)). Residues 104 to 468 (PRAIAHRAEE…PLEYELYYSC (365 aa)) form the GS catalytic domain. Mg(2+) is bound by residues glutamate 129 and glutamate 131. Glutamate 207 lines the ATP pocket. Mg(2+) contacts are provided by glutamate 212 and glutamate 220. L-glutamate contacts are provided by residues 264–265 (NG) and glycine 265. Position 269 (histidine 269) interacts with Mg(2+). ATP is bound by residues 271–273 (HMS) and serine 273. L-glutamate contacts are provided by arginine 321, glutamate 327, and arginine 339. Arginine 339, arginine 344, and arginine 352 together coordinate ATP. Glutamate 357 is a Mg(2+) binding site. Arginine 359 contacts L-glutamate. Tyrosine 397 carries the O-AMP-tyrosine modification.

It belongs to the glutamine synthetase family. Oligomer of 12 subunits arranged in the form of two hexagons. Requires Mg(2+) as cofactor. Mn(2+) is required as a cofactor.

The catalysed reaction is L-glutamate + NH4(+) + ATP = L-glutamine + ADP + phosphate + H(+). When cellular nitrogen levels are high, the C-terminal adenylyl transferase (AT) of GlnE inhibits GlnA by covalent transfer of an adenylyl group from ATP to Tyr-397. Conversely, when nitrogen levels are low, the N-terminal adenylyl removase (AR) of GlnE activates GlnA by removing the adenylyl group by phosphorolysis. The fully adenylated enzyme complex is inactive. In terms of biological role, catalyzes the formation of glutamine from glutamate and ammonia. In vitro, can also use hydroxylamine, methylamine and ethylamine, with 32%, 7% and 1% activity compared to ammonia, respectively. This Pseudomonas taetrolens protein is Glutamine synthetase.